Reading from the N-terminus, the 220-residue chain is Transcriptional regulatory protein LnrK (220 aa).

The region spanning 3–119 (KIIITDDQDI…TIVKAVMTVH (117 aa)) is the Response regulatory domain. D54 carries the post-translational modification 4-aspartylphosphate. Positions 151–216 (KPNELLDLTE…QAAIYSVRYG (66 aa)) constitute an HTH luxR-type domain. Residues 175 to 194 (NKEIAEKLYITEGTVKNHVS) constitute a DNA-binding region (H-T-H motif).

In terms of processing, phosphorylated by LnrJ.

The protein resides in the cytoplasm. Functionally, required for resistance to linearmycins, a family of antibiotic-specialized metabolites produced by some streptomycetes. Member of the two-component regulatory system LnrJ/LnrK, which induces expression of the LnrLMN ABC transporter in response to linearmycins and other polyenes. Probably binds to the promoter region of the lnrLMN operon and directly regulates its expression. May also promote biofilm formation. The polypeptide is Transcriptional regulatory protein LnrK (Bacillus subtilis (strain 168)).